Here is a 366-residue protein sequence, read N- to C-terminus: MPTETLQTGSMVKPVSPAGTFTSAVPLRILNKGPDYFRRQAEPNPKRLSAVERLEADKAKYVKSQEVINAKQEPVKPAVLAKPPVCPGAKRVLGSPTLKVFGNHAKTESGVQRETLKLEILKNIINSSEGSSSGSGHKHSSRNWPPHRDTTELHRHSFAESLKVYPTPGRGSPQESSSHVSRRLLEQSAESFLHVSHSSSDIRKVTSVKPLKAIPCSSSAPPLPPKPKVAAMKSPDADQVEPACGVSRRPSLQRSKSDLSDRYFRVDADVERFFNYCGLDPEELENLGMENFARANSDIISLNFRSASMISSDCEQSQDSNSDLRNDDSANDRVPYGISAIERNARIIKWLYSIKQARESQKVSHV.

Disordered stretches follow at residues S127–T150, K163–R182, and I214–Q253. A phosphoserine mark is found at S234 and S297. Positions D313–R333 are disordered. A compositionally biased stretch (basic and acidic residues) spans S322–N331.

It belongs to the FAM110 family.

It is found in the cytoplasm. The protein localises to the cytoskeleton. Its subcellular location is the microtubule organizing center. It localises to the centrosome. This Rattus norvegicus (Rat) protein is Protein FAM110B (Fam110b).